The chain runs to 144 residues: Interleukin-9 (144 aa).

The N-terminal stretch at 1–18 (MLVTYILASVLLFSSVLG) is a signal peptide. Gln19 is modified (pyrrolidone carboxylic acid). Residues Asn50, Asn78, Asn101, and Asn114 are each glycosylated (N-linked (GlcNAc...) asparagine).

This sequence belongs to the IL-7/IL-9 family. As to quaternary structure, interacts with IL9R. Interacts with IL2RG.

Its subcellular location is the secreted. Functionally, multifunctional cytokine secreted mainly by T-helper 2 lymphocytes and also mast cells or NKT cells that plays important roles in the immune response against parasites. Affects intestinal epithelial permeability and adaptive immunity. In addition, induces the differentiation of specific T-cell subsets such as IL-17 producing helper T-cells (TH17) and also proliferation and differentiation of mast cells. Mechanistically, exerts its biological effects through a receptor composed of IL9R subunit and a signal transducing subunit IL2RG. Receptor stimulation results in the rapid activation of JAK1 and JAK3 kinase activities leading to STAT1, STAT3 and STAT5-mediated transcriptional programs. Induction of differentiation genes seems to be mediated by STAT1 alone, while protection of cells from apoptosis depends on STAT3 and STAT5. In Mus musculus (Mouse), this protein is Interleukin-9 (Il9).